The sequence spans 317 residues: NF-kappa-B inhibitor alpha (317 aa).

Residues 1–39 are disordered; the sequence is MFQAAERPQEWAMEGPRDGLKKERLLDDRHDSGLDSMKD. Residues 15–39 are compositionally biased toward basic and acidic residues; sequence GPRDGLKKERLLDDRHDSGLDSMKD. A Glycyl lysine isopeptide (Lys-Gly) (interchain with G-Cter in SUMO); alternate cross-link involves residue lysine 21. A Glycyl lysine isopeptide (Lys-Gly) (interchain with G-Cter in ubiquitin); alternate cross-link involves residue lysine 21. A Glycyl lysine isopeptide (Lys-Gly) (interchain with G-Cter in ubiquitin) cross-link involves residue lysine 22. The short motif at 30-36 is the Destruction motif element; the sequence is HDSGLDS. Residue serine 32 is modified to Phosphoserine; by IKKA and IKKE. Residue serine 36 is modified to Phosphoserine; by IKKA, IKKB, IKKE and TBK1. Tyrosine 42 carries the phosphotyrosine; by Tyr-kinases modification. A Nuclear export signal motif is present at residues 45–54; that stretch reads MVKELQEIRL. ANK repeat units follow at residues 73 to 103, 110 to 139, 143 to 172, 182 to 211, and 216 to 245; these read DGDS…DLAF, LQQT…DPEL, RGNT…TPHL, NGHT…DVNA, and NGRT…DVNR. Residues 110–120 carry the Nuclear import signal motif; that stretch reads LQQTPLHLAVI. (3S)-3-hydroxyasparagine; by HIF1AN; partial occurs at positions 210 and 244. Phosphoserine; by CK2 is present on residues serine 283 and serine 288. A Phosphothreonine; by CK2 modification is found at threonine 291. Residue serine 293 is modified to Phosphoserine; by CK2. Position 299 is a phosphothreonine; by CK2 (threonine 299).

The protein belongs to the NF-kappa-B inhibitor family. In terms of assembly, interacts with RELA; the interaction requires the nuclear import signal. Part of a 70-90 kDa complex at least consisting of CHUK, IKBKB, NFKBIA, RELA, ELP1 and MAP3K14. Interacts with NKIRAS1 and NKIRAS2. Interacts with isoform 1 and isoform 2 of RWDD3; the interaction enhances sumoylation. Interacts with PRMT2. Interacts with PRKACA in platelets; this interaction is disrupted by thrombin and collagen. Interacts with MEFV. Interacts with DDRGK1; positively regulates NFKBIA phosphorylation and degradation. Interacts with HNRNPA2B1; the interaction may be mediated by the RRM2 domain of HNRNPA2B1, and HNRNPA2B1 may interact simultaneously with FAM76B and either NFKBIA or NFKBIE to form a complex. (Microbial infection) Interacts with HBV protein X. In terms of processing, phosphorylated at Ser-32 and Ser-36 by IKKA/CHUK and IKKB/IKBKB; disables inhibition of NF-kappa-B DNA-binding activity. Phosphorylation at positions 32 and 36 is prerequisite to recognition by the SCF(FBXW11) and SCF(BTRC) complexes, leading to polyubiquitination and subsequent degradation. Phosphorylated at Ser-32 in response to FK506 treatment: phosphorylation is independent of IKKA/CHUK and IKKB/IKBKB and promotes NFKBIA degradation, followed by NF-kappa-B activation. Phosphorylated at Tyr-42: its effect is however unclear. According to a report, phosphorylation at Tyr-42 activates NF-kappa-B without triggering proteolytic degradation of NFKBIA. According to another publication, phosphorylation at Tyr-42 inhibits NF-kappa-B activity by preventing phosphorylation at Ser-32 and Ser-36 and subsequent ubiquitination and degradation. Post-translationally, polyubiquitinated at Lys-21 and/or Lys-22 following phosphorylation at Ser-32 and Ser-36. Monoubiquitinated at Lys-21 and/or Lys-22 by UBE2D3. Ubiquitin chain elongation is then performed by CDC34 in cooperation with the SCF(FBXW11) E3 ligase complex, building ubiquitin chains from the UBE2D3-primed NFKBIA-linked ubiquitin. The resulting polyubiquitination leads to protein degradation. Also ubiquitinated by the SCF(BTRC) complex following stimulus-dependent phosphorylation at Ser-32 and Ser-36. Deubiquitinated by USP38, leading to NF-kappa-B inhibition. Sumoylated; sumoylation requires the presence of the nuclear import signal. Sumoylation blocks ubiquitination and proteasome-mediated degradation of the protein thereby increasing the protein stability. In terms of processing, hydroxylated by HIF1AN. Post-translationally, (Microbial infection) Deubiquitinated by porcine reproductive and respiratory syndrome virus Nsp2 protein, which thereby interferes with NFKBIA degradation and impairs subsequent NF-kappa-B activation.

Its subcellular location is the cytoplasm. The protein resides in the nucleus. Its function is as follows. Inhibits the activity of dimeric NF-kappa-B/REL complexes by trapping REL (RELA/p65 and NFKB1/p50) dimers in the cytoplasm by masking their nuclear localization signals. On cellular stimulation by immune and pro-inflammatory responses, becomes phosphorylated promoting ubiquitination and degradation, enabling the dimeric RELA to translocate to the nucleus and activate transcription. In Homo sapiens (Human), this protein is NF-kappa-B inhibitor alpha (NFKBIA).